Consider the following 289-residue polypeptide: UPF0276 protein BB1291 (289 aa).

It belongs to the UPF0276 family.

This chain is UPF0276 protein BB1291, found in Bordetella bronchiseptica (strain ATCC BAA-588 / NCTC 13252 / RB50) (Alcaligenes bronchisepticus).